The chain runs to 91 residues: Cytochrome b-c1 complex subunit 6, mitochondrial (91 aa).

The transit peptide at 1–13 (MGLEDEQKMLTES) directs the protein to the mitochondrion. The interval 1–30 (MGLEDEQKMLTESGDPEEEEEEEEELVDPL) is disordered. The segment covering 14-27 (GDPEEEEEEEEELV) has biased composition (acidic residues). Cystine bridges form between cysteine 37–cysteine 81 and cysteine 53–cysteine 67. An N6-acetyllysine modification is found at lysine 42. Lysine 85 carries the N6-acetyllysine modification.

It belongs to the UQCRH/QCR6 family. As to quaternary structure, component of the ubiquinol-cytochrome c oxidoreductase (cytochrome b-c1 complex, complex III, CIII), a multisubunit enzyme composed of 11 subunits. The complex is composed of 3 respiratory subunits cytochrome b, cytochrome c1 and Rieske protein UQCRFS1, 2 core protein subunits UQCRC1/QCR1 and UQCRC2/QCR2, and 6 low-molecular weight protein subunits UQCRH/QCR6, UQCRB/QCR7, UQCRQ/QCR8, UQCR10/QCR9, UQCR11/QCR10 and subunit 9, the cleavage product of Rieske protein UQCRFS1. The complex exists as an obligatory dimer and forms supercomplexes (SCs) in the inner mitochondrial membrane with NADH-ubiquinone oxidoreductase (complex I, CI) and cytochrome c oxidase (complex IV, CIV), resulting in different assemblies (supercomplex SCI(1)III(2)IV(1) and megacomplex MCI(2)III(2)IV(2)).

The protein localises to the mitochondrion inner membrane. Functionally, component of the ubiquinol-cytochrome c oxidoreductase, a multisubunit transmembrane complex that is part of the mitochondrial electron transport chain which drives oxidative phosphorylation. The respiratory chain contains 3 multisubunit complexes succinate dehydrogenase (complex II, CII), ubiquinol-cytochrome c oxidoreductase (cytochrome b-c1 complex, complex III, CIII) and cytochrome c oxidase (complex IV, CIV), that cooperate to transfer electrons derived from NADH and succinate to molecular oxygen, creating an electrochemical gradient over the inner membrane that drives transmembrane transport and the ATP synthase. The cytochrome b-c1 complex catalyzes electron transfer from ubiquinol to cytochrome c, linking this redox reaction to translocation of protons across the mitochondrial inner membrane, with protons being carried across the membrane as hydrogens on the quinol. In the process called Q cycle, 2 protons are consumed from the matrix, 4 protons are released into the intermembrane space and 2 electrons are passed to cytochrome c. This is Cytochrome b-c1 complex subunit 6, mitochondrial (UQCRH) from Homo sapiens (Human).